We begin with the raw amino-acid sequence, 231 residues long: Casein kinase II subunit beta (231 aa).

Belongs to the casein kinase 2 subunit beta family. In terms of assembly, tetramer composed of two alpha chains, one beta chain and one beta' chain. Post-translationally, phosphorylated by alpha subunit.

In terms of biological role, regulatory subunit of casein kinase II/CK2. As part of the kinase complex regulates the basal catalytic activity of the alpha subunit a constitutively active serine/threonine-protein kinase that phosphorylates a large number of substrates containing acidic residues C-terminal to the phosphorylated serine or threonine. This chain is Casein kinase II subunit beta, found in Schizosaccharomyces pombe (strain 972 / ATCC 24843) (Fission yeast).